The sequence spans 122 residues: Secreted RxLR effector protein 80 (122 aa).

A signal peptide spans 1 to 21 (MKKRALPIVIFVISLQQSSQS). A RxLR motif is present at residues 72–75 (RSLR).

Belongs to the RxLR effector family.

It localises to the secreted. The protein resides in the host endoplasmic reticulum membrane. Secreted effector that dos not suppress the host cell death induced by cell death-inducing proteins. The sequence is that of Secreted RxLR effector protein 80 from Plasmopara viticola (Downy mildew of grapevine).